The sequence spans 129 residues: Cocaine- and amphetamine-regulated transcript protein (129 aa).

Residues M1–A27 form the signal peptide. Y41 bears the Phosphotyrosine mark. Residue S48 is modified to Phosphoserine. 3 disulfides stabilise this stretch: C95–C113, C101–C121, and C115–C128.

It belongs to the CART family.

The protein localises to the secreted. Functionally, satiety factor closely associated with the actions of leptin and neuropeptide y; this anorectic peptide inhibits both normal and starvation-induced feeding and completely blocks the feeding response induced by neuropeptide Y and regulated by leptin in the hypothalamus. This Mus musculus (Mouse) protein is Cocaine- and amphetamine-regulated transcript protein (Cartpt).